The following is a 126-amino-acid chain: NADPH-dependent 7-cyano-7-deazaguanine reductase (126 aa).

C40 functions as the Thioimide intermediate in the catalytic mechanism. The Proton donor role is filled by D47. Residues 62–64 (IEL) and 81–82 (HE) each bind substrate.

Belongs to the GTP cyclohydrolase I family. QueF type 1 subfamily.

The protein resides in the cytoplasm. It catalyses the reaction 7-aminomethyl-7-carbaguanine + 2 NADP(+) = 7-cyano-7-deazaguanine + 2 NADPH + 3 H(+). The protein operates within tRNA modification; tRNA-queuosine biosynthesis. Its function is as follows. Catalyzes the NADPH-dependent reduction of 7-cyano-7-deazaguanine (preQ0) to 7-aminomethyl-7-deazaguanine (preQ1). The chain is NADPH-dependent 7-cyano-7-deazaguanine reductase from Campylobacter jejuni subsp. doylei (strain ATCC BAA-1458 / RM4099 / 269.97).